Here is an 847-residue protein sequence, read N- to C-terminus: Alanine--tRNA ligase (847 aa).

Zn(2+) is bound by residues H554, H558, C656, and H660.

It belongs to the class-II aminoacyl-tRNA synthetase family. Requires Zn(2+) as cofactor.

The protein resides in the cytoplasm. The catalysed reaction is tRNA(Ala) + L-alanine + ATP = L-alanyl-tRNA(Ala) + AMP + diphosphate. Its function is as follows. Catalyzes the attachment of alanine to tRNA(Ala) in a two-step reaction: alanine is first activated by ATP to form Ala-AMP and then transferred to the acceptor end of tRNA(Ala). Also edits incorrectly charged Ser-tRNA(Ala) and Gly-tRNA(Ala) via its editing domain. The sequence is that of Alanine--tRNA ligase from Helicobacter pylori (strain HPAG1).